The chain runs to 260 residues: 3-methyl-2-oxobutanoate hydroxymethyltransferase (260 aa).

Residues Asp-42 and Asp-81 each coordinate Mg(2+). 3-methyl-2-oxobutanoate is bound by residues Asp-42 to Ser-43, Asp-81, and Lys-109. Residue Glu-111 coordinates Mg(2+). Glu-178 acts as the Proton acceptor in catalysis.

The protein belongs to the PanB family. In terms of assembly, homodecamer; pentamer of dimers. It depends on Mg(2+) as a cofactor.

The protein localises to the cytoplasm. The catalysed reaction is 3-methyl-2-oxobutanoate + (6R)-5,10-methylene-5,6,7,8-tetrahydrofolate + H2O = 2-dehydropantoate + (6S)-5,6,7,8-tetrahydrofolate. Its pathway is cofactor biosynthesis; (R)-pantothenate biosynthesis; (R)-pantoate from 3-methyl-2-oxobutanoate: step 1/2. Functionally, catalyzes the reversible reaction in which hydroxymethyl group from 5,10-methylenetetrahydrofolate is transferred onto alpha-ketoisovalerate to form ketopantoate. In Vesicomyosocius okutanii subsp. Calyptogena okutanii (strain HA), this protein is 3-methyl-2-oxobutanoate hydroxymethyltransferase.